Consider the following 409-residue polypeptide: MAAPQRSGSAALLPSANGAGRAARRTARQVPEELLNNVELREAVGALPSNYNFEIPKTIWRIRQAGAKKVALQMPEGLLMFACTIADIIERFTDAEAVVMGDVTYGACCVDDYTARALGADFLVHYGHSCLIPIDATRGLKMLYVFVDIKIDTSHFLDTIRFNFAVGSSLALVSTIQFVAAVQAASQELQSQYKVCVPQCKPLSPGEILGCTSPRLARDTDAIVYLGDGRFHLESIMIANPGIPAYRYDPYSKVFSQEHYAHDRMHGARQAAIRSAARARCWGLLLGTLGRQGSPAILQHLESRLRALGRPFVRVLLSEIFPSKLQLFDSVDAWVQIACPRLSIDWGEAFSKPLLTPYEAAVALGDIEWQQPYPMDFYASQSLGPWTANHTARPAQEKPPATPSLKKWH.

The disordered stretch occupies residues 1–22; it reads MAAPQRSGSAALLPSANGAGRA. [4Fe-4S] cluster is bound by residues C108, C211, and C339. The tract at residues 388–409 is disordered; the sequence is ANHTARPAQEKPPATPSLKKWH.

This sequence belongs to the DPH1/DPH2 family. DPH1 subfamily. As to quaternary structure, component of the 2-(3-amino-3-carboxypropyl)histidine synthase complex composed of DPH1, DPH2, DPH3 and a NADH-dependent reductase. The cofactor is [4Fe-4S] cluster.

The protein localises to the nucleus. It is found in the cytoplasm. It carries out the reaction L-histidyl-[translation elongation factor 2] + S-adenosyl-L-methionine = 2-[(3S)-amino-3-carboxypropyl]-L-histidyl-[translation elongation factor 2] + S-methyl-5'-thioadenosine + H(+). The protein operates within protein modification; peptidyl-diphthamide biosynthesis. Its function is as follows. Catalyzes the first step of diphthamide biosynthesis, a post-translational modification of histidine which occurs in elongation factor 2. DPH1 and DPH2 transfer a 3-amino-3-carboxypropyl (ACP) group from S-adenosyl-L-methionine (SAM) to a histidine residue, the reaction is assisted by a reduction system comprising DPH3 and a NADH-dependent reductase. This is 2-(3-amino-3-carboxypropyl)histidine synthase subunit 1 (DPH1) from Gallus gallus (Chicken).